We begin with the raw amino-acid sequence, 593 residues long: Aspartate--tRNA(Asp/Asn) ligase (593 aa).

E172 lines the L-aspartate pocket. Residues 196 to 199 (QLFK) are aspartate. Residue R218 coordinates L-aspartate. ATP is bound by residues 218 to 220 (RDE) and Q227. H450 lines the L-aspartate pocket. E484 contacts ATP. R491 is a binding site for L-aspartate. 536 to 539 (GLDR) lines the ATP pocket.

Belongs to the class-II aminoacyl-tRNA synthetase family. Type 1 subfamily. In terms of assembly, homodimer.

It is found in the cytoplasm. The catalysed reaction is tRNA(Asx) + L-aspartate + ATP = L-aspartyl-tRNA(Asx) + AMP + diphosphate. In terms of biological role, aspartyl-tRNA synthetase with relaxed tRNA specificity since it is able to aspartylate not only its cognate tRNA(Asp) but also tRNA(Asn). Reaction proceeds in two steps: L-aspartate is first activated by ATP to form Asp-AMP and then transferred to the acceptor end of tRNA(Asp/Asn). The polypeptide is Aspartate--tRNA(Asp/Asn) ligase (Nitrosomonas europaea (strain ATCC 19718 / CIP 103999 / KCTC 2705 / NBRC 14298)).